A 415-amino-acid chain; its full sequence is Serine--tRNA ligase (415 aa).

Residue 231 to 233 (TAE) coordinates L-serine. 262-264 (RSE) is an ATP binding site. Residue Glu285 participates in L-serine binding. Position 349–352 (349–352 (EISS)) interacts with ATP. Ser383 is a binding site for L-serine.

Belongs to the class-II aminoacyl-tRNA synthetase family. Type-1 seryl-tRNA synthetase subfamily. As to quaternary structure, homodimer. The tRNA molecule binds across the dimer.

The protein resides in the cytoplasm. The catalysed reaction is tRNA(Ser) + L-serine + ATP = L-seryl-tRNA(Ser) + AMP + diphosphate + H(+). It carries out the reaction tRNA(Sec) + L-serine + ATP = L-seryl-tRNA(Sec) + AMP + diphosphate + H(+). It functions in the pathway aminoacyl-tRNA biosynthesis; selenocysteinyl-tRNA(Sec) biosynthesis; L-seryl-tRNA(Sec) from L-serine and tRNA(Sec): step 1/1. Its function is as follows. Catalyzes the attachment of serine to tRNA(Ser). Is also able to aminoacylate tRNA(Sec) with serine, to form the misacylated tRNA L-seryl-tRNA(Sec), which will be further converted into selenocysteinyl-tRNA(Sec). The sequence is that of Serine--tRNA ligase from Helicobacter pylori (strain G27).